The primary structure comprises 186 residues: UPF0340 protein SEQ_1951 (186 aa).

The protein belongs to the UPF0340 family.

The protein is UPF0340 protein SEQ_1951 of Streptococcus equi subsp. equi (strain 4047).